A 188-amino-acid chain; its full sequence is Pyridoxal 5'-phosphate synthase subunit PdxT (188 aa).

Glycine 47–serine 49 is a binding site for L-glutamine. Cysteine 79 (nucleophile) is an active-site residue. L-glutamine-binding positions include arginine 105 and isoleucine 134–arginine 135. Residues histidine 170 and glutamate 172 each act as charge relay system in the active site.

Belongs to the glutaminase PdxT/SNO family. As to quaternary structure, in the presence of PdxS, forms a dodecamer of heterodimers. Only shows activity in the heterodimer.

It carries out the reaction aldehydo-D-ribose 5-phosphate + D-glyceraldehyde 3-phosphate + L-glutamine = pyridoxal 5'-phosphate + L-glutamate + phosphate + 3 H2O + H(+). The catalysed reaction is L-glutamine + H2O = L-glutamate + NH4(+). Its pathway is cofactor biosynthesis; pyridoxal 5'-phosphate biosynthesis. Functionally, catalyzes the hydrolysis of glutamine to glutamate and ammonia as part of the biosynthesis of pyridoxal 5'-phosphate. The resulting ammonia molecule is channeled to the active site of PdxS. In Listeria monocytogenes serotype 4b (strain CLIP80459), this protein is Pyridoxal 5'-phosphate synthase subunit PdxT.